The primary structure comprises 274 residues: Secreted RxLR effector protein 40 (274 aa).

The first 21 residues, 1–21 (MRLYTQVVAASLVATLAIVDS), serve as a signal peptide directing secretion. The short motif at 35–53 (RFLRQDNATVARVSEDGER) is the RxLR-dEER element. N-linked (GlcNAc...) asparagine glycosylation is found at Asn41, Asn74, and Asn258.

The protein belongs to the RxLR effector family.

It is found in the secreted. It localises to the host nucleus. Its subcellular location is the host cytoplasm. In terms of biological role, secreted effector that completely suppresses the host cell death induced by cell death-inducing proteins. The protein is Secreted RxLR effector protein 40 of Plasmopara viticola (Downy mildew of grapevine).